A 332-amino-acid polypeptide reads, in one-letter code: Formamidase (332 aa).

A CN hydrolase domain is found at 14–259 (FLAALIQYPV…WEIVTAEVYP (246 aa)). The Proton acceptor role is filled by E60. K132 serves as the catalytic Proton donor. Catalysis depends on C165, which acts as the Nucleophile.

Belongs to the carbon-nitrogen hydrolase superfamily. Aliphatic amidase family.

The enzyme catalyses formamide + H2O = formate + NH4(+). Is an aliphatic amidase with a restricted substrate specificity, as it only hydrolyzes formamide. This chain is Formamidase, found in Bacillus cereus (strain Q1).